An 81-amino-acid chain; its full sequence is Acyl carrier protein (81 aa).

The region spanning 2-80 (SKVDNIEQKV…DVVNYIKEHK (79 aa)) is the Carrier domain. Serine 40 carries the post-translational modification O-(pantetheine 4'-phosphoryl)serine.

Belongs to the acyl carrier protein (ACP) family. In terms of processing, 4'-phosphopantetheine is transferred from CoA to a specific serine of apo-ACP by AcpS. This modification is essential for activity because fatty acids are bound in thioester linkage to the sulfhydryl of the prosthetic group.

It localises to the cytoplasm. Its pathway is lipid metabolism; fatty acid biosynthesis. Functionally, carrier of the growing fatty acid chain in fatty acid biosynthesis. The polypeptide is Acyl carrier protein (Rickettsia bellii (strain OSU 85-389)).